The primary structure comprises 401 residues: Keratin-associated protein 10-4 (401 aa).

35 consecutive repeat copies span residues 36-40 (CCEPP), 41-45 (CCAPS), 46-50 (CCAPA), 67-71 (CCPVT), 89-93 (CCQQS), 99-103 (CCASS), 109-113 (CCVPV), 114-118 (CCKTV), 119-123 (CCKPV), 124-128 (CCVPV), 129-133 (CCGDS), 135-139 (CCQQS), 145-149 (CCTSS), 155-159 (CCVPI), 160-164 (CCKPV), 172-176 (CCQQS), 186-190 (CCQAV), 208-212 (CCQQS), 218-222 (CCTSS), 228-232 (CCVPV), 233-237 (CCKTV), 238-242 (CCKPV), 250-254 (CCQQS), 270-274 (CCVPV), 275-279 (CCKPV), 280-284 (CCKPV), 297-301 (CCQQS), 307-311 (CCTSS), 317-321 (CCVPV), 322-326 (CCKPV), 339-343 (CCQQS), 349-353 (CCTTS), 354-358 (CCRPS), 373-377 (CCVPV), and 391-395 (CCRPA). The interval 36-395 (CCEPPCCAPS…SCQPSCCRPA (360 aa)) is 36 X 5 AA repeats of C-C-X(3).

This sequence belongs to the KRTAP type 10 family. Interacts with hair keratins. As to expression, restricted to hair root, not detected in any other tissues.

In terms of biological role, in the hair cortex, hair keratin intermediate filaments are embedded in an interfilamentous matrix, consisting of hair keratin-associated proteins (KRTAP), which are essential for the formation of a rigid and resistant hair shaft through their extensive disulfide bond cross-linking with abundant cysteine residues of hair keratins. The matrix proteins include the high-sulfur and high-glycine-tyrosine keratins. This Homo sapiens (Human) protein is Keratin-associated protein 10-4 (KRTAP10-4).